A 464-amino-acid chain; its full sequence is GDNF family receptor alpha-2 (464 aa).

Positions 1–21 are cleaved as a signal peptide; sequence MILANAFCLFFFLDETLRSLA. Intrachain disulfides connect cysteine 40/cysteine 93, cysteine 47/cysteine 53, cysteine 63/cysteine 78, cysteine 95/cysteine 105, cysteine 161/cysteine 222, cysteine 168/cysteine 174, cysteine 185/cysteine 200, cysteine 195/cysteine 241, cysteine 224/cysteine 229, cysteine 251/cysteine 323, cysteine 258/cysteine 264, cysteine 275/cysteine 293, cysteine 285/cysteine 347, and cysteine 325/cysteine 335. A glycan (N-linked (GlcNAc...) asparagine) is linked at asparagine 52. N-linked (GlcNAc...) asparagine glycosylation is present at asparagine 357. Residues 360–374 show a composition bias toward polar residues; the sequence is DVNLSPKSPPFQATQ. Residues 360 to 392 are disordered; sequence DVNLSPKSPPFQATQAPRVDKTPSLPDDLSDST. Residues 381 to 392 show a composition bias toward low complexity; it reads TPSLPDDLSDST. N-linked (GlcNAc...) asparagine glycosylation is present at asparagine 413. Asparagine 440 carries the GPI-anchor amidated asparagine lipid modification. A propeptide spans 441–464 (removed in mature form); that stretch reads SGPRRTRPSAALTAASFLMLKLAL.

It belongs to the GDNFR family. In terms of assembly, interacts with NRTN ligand and RET: forms a 2:2:2 ternary complex composed of NRTN ligand, GFRA2 and RET receptor. Also forms a 4:4:4 tetrameric complex composed of 4 copies of NRTN ligand, GFRA2 and RET receptor, which prevents endocytosis of RET. Interacts with SORL1.

The protein resides in the cell membrane. Its function is as follows. Receptor for neurturin (NRTN), a growth factor that supports the survival of sympathetic neurons. NRTN-binding leads to autophosphorylation and activation of the RET receptor. Also able to mediate GDNF signaling through the RET tyrosine kinase receptor. The polypeptide is GDNF family receptor alpha-2 (GFRA2) (Bos taurus (Bovine)).